Here is a 338-residue protein sequence, read N- to C-terminus: Putative transposase for insertion sequence element IS4SA (338 aa).

Belongs to the transposase 11 family.

This is Putative transposase for insertion sequence element IS4SA from Synechocystis sp. (strain ATCC 27184 / PCC 6803 / Kazusa).